We begin with the raw amino-acid sequence, 550 residues long: Proteasome-associated ATPase (550 aa).

Residues 9-48 adopt a coiled-coil conformation; it reads EELARRVASLSAQNERLAQILVEARSKIVGLQQQIDDLAQ. 233-238 contacts ATP; the sequence is GCGKTL. A disordered region spans residues 528–550; it reads KGEGKNPTPAKAIETPHNTGPYL. The tract at residues 549 to 550 is docks into pockets in the proteasome alpha-ring; the sequence is YL.

It belongs to the AAA ATPase family. As to quaternary structure, homohexamer. Assembles into a hexameric ring structure that caps the 20S proteasome core. Strongly interacts with the prokaryotic ubiquitin-like protein Pup through a hydrophobic interface; the interacting region of ARC lies in its N-terminal coiled-coil domain. There is one Pup binding site per ARC hexamer ring. Upon ATP-binding, the C-terminus of ARC interacts with the alpha-rings of the proteasome core, possibly by binding to the intersubunit pockets.

It functions in the pathway protein degradation; proteasomal Pup-dependent pathway. In terms of biological role, ATPase which is responsible for recognizing, binding, unfolding and translocation of pupylated proteins into the bacterial 20S proteasome core particle. May be essential for opening the gate of the 20S proteasome via an interaction with its C-terminus, thereby allowing substrate entry and access to the site of proteolysis. Thus, the C-termini of the proteasomal ATPase may function like a 'key in a lock' to induce gate opening and therefore regulate proteolysis. This Jonesia denitrificans (strain ATCC 14870 / DSM 20603 / BCRC 15368 / CIP 55.134 / JCM 11481 / NBRC 15587 / NCTC 10816 / Prevot 55134) (Listeria denitrificans) protein is Proteasome-associated ATPase.